Reading from the N-terminus, the 325-residue chain is Tagatose 1,6-diphosphate aldolase 1 (325 aa).

Belongs to the aldolase LacD family.

The enzyme catalyses D-tagatofuranose 1,6-bisphosphate = D-glyceraldehyde 3-phosphate + dihydroxyacetone phosphate. It participates in carbohydrate metabolism; D-tagatose 6-phosphate degradation; D-glyceraldehyde 3-phosphate and glycerone phosphate from D-tagatose 6-phosphate: step 2/2. This chain is Tagatose 1,6-diphosphate aldolase 1, found in Streptococcus agalactiae serotype III (strain NEM316).